Consider the following 107-residue polypeptide: Neuroparsin-A (107 aa).

Positions 1-22 (MKATAALVAATLLLAVTLFHRA) are cleaved as a signal peptide. Positions 23–24 (ER) are excised as a propeptide.

In terms of assembly, homodimer; disulfide-linked.

Functionally, neurosparins are multifunctional neurohormones: they inhibit the effects of juvenile hormone, stimulate fluid reabsorption of isolated recta and induces an increase in hemolymph lipid and trehalose levels. The chain is Neuroparsin-A from Locusta migratoria (Migratory locust).